Consider the following 117-residue polypeptide: DNA-directed RNA polymerase subunit omega (117 aa).

Basic and acidic residues predominate over residues 96–105 (KEEAEEEAKQ). The segment at 96–117 (KEEAEEEAKQKNSRAAKAAAAE) is disordered. The segment covering 108-117 (SRAAKAAAAE) has biased composition (low complexity).

The protein belongs to the RNA polymerase subunit omega family. In terms of assembly, the RNAP catalytic core consists of 2 alpha, 1 beta, 1 beta' and 1 omega subunit. When a sigma factor is associated with the core the holoenzyme is formed, which can initiate transcription.

The catalysed reaction is RNA(n) + a ribonucleoside 5'-triphosphate = RNA(n+1) + diphosphate. Functionally, promotes RNA polymerase assembly. Latches the N- and C-terminal regions of the beta' subunit thereby facilitating its interaction with the beta and alpha subunits. In Lactococcus lactis subsp. cremoris (strain MG1363), this protein is DNA-directed RNA polymerase subunit omega.